We begin with the raw amino-acid sequence, 148 residues long: MAQMTVQVVTPDGLKYDHHASFIHAVTKDGQIGILPGHINLIAPLEVDELKVRRVDDESHVDWIAVNGGIIEVKDDFITIIANSAERDRDIDVSRAERAKQRAERVLEEETKRVLEKATKSDRNDDVQRAQIALRRALNRINVGTKIR.

It belongs to the ATPase epsilon chain family. As to quaternary structure, F-type ATPases have 2 components, CF(1) - the catalytic core - and CF(0) - the membrane proton channel. CF(1) has five subunits: alpha(3), beta(3), gamma(1), delta(1), epsilon(1). CF(0) has three main subunits: a, b and c.

The protein resides in the cell membrane. Its function is as follows. Produces ATP from ADP in the presence of a proton gradient across the membrane. This is ATP synthase epsilon chain from Streptococcus thermophilus (strain ATCC BAA-250 / LMG 18311).